The following is a 59-amino-acid chain: Large ribosomal subunit protein bL32 (59 aa).

The interval 1–59 (MAVQQNKKSPSKRGMHRAHDFLTTPPLAVESTTGEAHLRHHISPAGFYRGKKVTKGKGE) is disordered. The span at 49–59 (RGKKVTKGKGE) shows a compositional bias: basic residues.

The protein belongs to the bacterial ribosomal protein bL32 family.

This chain is Large ribosomal subunit protein bL32, found in Dechloromonas aromatica (strain RCB).